A 3598-amino-acid polypeptide reads, in one-letter code: Dystrophin, isoforms A/C/F/G/H (3598 aa).

Residues Met-1–Glu-230 form an actin-binding region. Calponin-homology (CH) domains lie at His-12–Asn-116 and Asn-127–Glu-230. Residues Arg-233–Arg-297 are disordered. The span at Asn-267–Arg-286 shows a compositional bias: polar residues. Spectrin repeat units follow at residues Val-307–Met-420, Ala-423–Gln-525, Gln-851–Asn-963, Ser-1056–His-1170, Thr-1173–Gln-1275, and Ser-1381–Arg-1483. Disordered stretches follow at residues Ala-1633–Asp-1696, Ser-1716–Ala-1742, Glu-1799–Ser-1854, Arg-1878–Val-1941, and Gly-2204–Ser-2233. Over residues Ser-1663–Thr-1679 the composition is skewed to low complexity. The segment covering Ser-1803 to Arg-1816 has biased composition (basic and acidic residues). Residues Ser-1832 and Ser-1838 each carry the phosphoserine modification. The span at Asn-1834–Glu-1843 shows a compositional bias: acidic residues. Residues Arg-1878–Asp-1893 show a composition bias toward basic and acidic residues. Positions Ser-2218–Ser-2233 are enriched in polar residues. 5 Spectrin repeats span residues Ala-2237–Asn-2363, Ser-2366–Ala-2472, His-2475–Ser-2576, Glu-2579–Glu-2712, and Thr-2715–Gln-2819. The interval Val-2655–Arg-2679 is disordered. Residues Ala-2822–Lys-2852 form a disordered region. Residues Gln-2849–Met-2882 form the WW domain. The ZZ-type zinc-finger motif lies at Lys-3107–Thr-3163. Residues Cys-3112, Cys-3115, Cys-3127, Cys-3130, Cys-3136, Cys-3139, His-3149, and His-3153 each coordinate Zn(2+). Ser-3207 is modified (phosphoserine). Disordered stretches follow at residues Glu-3316–Gly-3344, Asp-3387–Met-3449, Leu-3483–Leu-3545, and Glu-3560–Lys-3598. Composition is skewed to polar residues over residues Asn-3325–Leu-3337 and Ala-3408–Gly-3439. A compositionally biased stretch (low complexity) spans Gln-3485 to Gln-3499. Positions Gly-3505–Gly-3523 are enriched in gly residues. Over residues Ser-3534–Leu-3545 the composition is skewed to low complexity. The segment covering Glu-3560 to Asp-3570 has biased composition (acidic residues). Positions Ser-3571–Thr-3589 are enriched in low complexity.

In terms of assembly, component of the dystrophin associated protein complex (DAPC). Interacts with Dg, via the Dg WW domain binding sites. In terms of tissue distribution, isoform A, isoform F and isoform G are expressed in the midgut endoderm of stage 12 embryos. In stage 16 embryos, expression is also seen in the pericardial cells, cells at the ectoderm segmental border and cells along the midline of the CNS. During embryogenesis, isoform A is also expressed in the visceral mesoderm, muscle attachment sites, mesectodermal cells at the midline, the gut, and throughout muscle fibers. In larvae, isoform A is found in all muscle fibers, but not detectable in the brain or neuropil.

It is found in the cell membrane. It localises to the sarcolemma. The protein resides in the cytoplasm. Its subcellular location is the cytoskeleton. In terms of biological role, required for the maintenance of appropriate synaptic retrograde communication and the stabilization of muscle cell architecture or physiology. Both det and Dg are required for maintenance of early dpp signaling in the presumptive crossvein. Isoform A is not required to maintain muscle integrity, but plays a role in neuromuscular homeostasis by regulating neurotransmitter release. May play a role in anchoring the cytoskeleton to the plasma membrane. The chain is Dystrophin, isoforms A/C/F/G/H (Dys) from Drosophila melanogaster (Fruit fly).